The following is a 172-amino-acid chain: Peptidyl-prolyl cis-trans isomerase CYP18-4 (172 aa).

In terms of domain architecture, PPIase cyclophilin-type spans 7–170 (FFDMSLSGTP…KVVTITDCGQ (164 aa)).

This sequence belongs to the cyclophilin-type PPIase family. As to quaternary structure, interacts with A.tumefaciens VirD2. As to expression, ubiquitous, with higher levels in roots and flowers. Confined to vascular tissues. Also detected in stigmas, base of siliques and anthers.

It localises to the cytoplasm. The enzyme catalyses [protein]-peptidylproline (omega=180) = [protein]-peptidylproline (omega=0). Its activity is regulated as follows. Binds cyclosporin A (CsA). CsA mediates some of its effects via an inhibitory action on PPIase. In terms of biological role, PPIases accelerate the folding of proteins. It catalyzes the cis-trans isomerization of proline imidic peptide bonds in oligopeptides. This Arabidopsis thaliana (Mouse-ear cress) protein is Peptidyl-prolyl cis-trans isomerase CYP18-4 (CYP18-4).